We begin with the raw amino-acid sequence, 289 residues long: Bis(5'-nucleosyl)-tetraphosphatase, symmetrical (289 aa).

This sequence belongs to the Ap4A hydrolase family.

The enzyme catalyses P(1),P(4)-bis(5'-adenosyl) tetraphosphate + H2O = 2 ADP + 2 H(+). Functionally, hydrolyzes diadenosine 5',5'''-P1,P4-tetraphosphate to yield ADP. The protein is Bis(5'-nucleosyl)-tetraphosphatase, symmetrical of Pseudomonas fluorescens (strain ATCC BAA-477 / NRRL B-23932 / Pf-5).